Here is a 421-residue protein sequence, read N- to C-terminus: Putative leucine-rich repeat protein R380 (421 aa).

LRR repeat units lie at residues 48–69 (YLEK…QYLP), 70–85 (KIKE…THIP), 89–110 (NLIK…NQSK), 111–129 (LLYL…IFLP), 130–150 (ECRE…NYFP), 151–172 (NLRI…SSLI), and 173–191 (ELNI…PQLV).

The polypeptide is Putative leucine-rich repeat protein R380 (Acanthamoeba polyphaga (Amoeba)).